Consider the following 268-residue polypeptide: Microtubule-associated protein RP/EB family member 1 (268 aa).

Position 2 is an N-acetylalanine (Ala2). The Calponin-homology (CH) domain maps to 14-116 (NLSRHDMLAW…FVQWFKKFFD (103 aa)). Position 66 is an N6-crotonyllysine (Lys66). The residue at position 124 (Tyr124) is a Phosphotyrosine. The interval 124–268 (YDPVAARQGQ…GGPQEEQEEY (145 aa)) is interaction with MTUS2/TIP150. The disordered stretch occupies residues 146 to 187 (LNKPKKPLTSSSAAPQRPISTQRTAAAPKAGPGVVRKNPGVG). Over residues 153–169 (LTSSSAAPQRPISTQRT) the composition is skewed to polar residues. A phosphoserine mark is found at Ser155 and Ser165. Residues 185-255 (GVGNGDDEAA…LYATDEGFVI (71 aa)) form the EB1 C-terminal domain. The interval 185–268 (GVGNGDDEAA…GGPQEEQEEY (84 aa)) is interaction with CDK5RAP2. The interaction with APC stretch occupies residues 206–211 (TVEDLE). The tract at residues 208–268 (EDLEKERDFY…GGPQEEQEEY (61 aa)) is DCTN1-binding. Lys220 is modified (N6-acetyllysine). Residues 220–242 (KLRNIELICQENEGENDPVLQRI) form an APC-binding region. The segment at 232-255 (EGENDPVLQRIVDILYATDEGFVI) is interaction with SKA1.

It belongs to the MAPRE family. In terms of assembly, homodimer. Heterodimer with MAPRE3. Interacts with DCTN1, DCTN2, TERF1 and dynein intermediate chain. Interaction with DIAPH1 and DIAPH2. Interacts (via C-terminal residues 206-211) with APC (via C-terminal residues 2674-2843); the interaction inhibits association with and bundling of F-actin. Interacts with CLASP2, DST, KIF2C and STIM1; probably required for their targeting to the growing microtubule plus ends. Interacts with MTUS2; interaction is direct and probably targets MTUS2 to microtubules. Interacts (via C-terminus) with SKA1 (via SXIP motif); the interaction is direct and stabilizes the kinetochore-microtubule attachment of the SKA1 complex. Interacts with APC2. Interacts with CLASP1. Interacts with CDK5RAP2. Interacts with MACF1. Interacts with RABL2/RABL2A; binds preferentially to GTP-bound RABL2. Interacts with KCNAB2. Interacts (via C-terminus) with CLIP1. Interacts with SLAIN2 and SLAIN1. Interacts with KIF18B; this interaction is required for efficient accumulation of KIF18B at microtubule plus ends. Interacts with MISP. Interacts with KNSTRN. Interacts with NCKAP5L. Interacts with CAMSAP2. Interacts with PDE4DIP isoform 13/MMG8/SMYLE; this interaction is required for its recruitment to the Golgi apparatus. Forms a pericentrosomal complex with AKAP9, CDK5RAP2 and PDE4DIP isoform 13/MMG8/SMYLE; within this complex, MAPRE1 binding to CDK5RAP2 may be mediated by PDE4DIP. Interacts with AKNA. Interacts with GAS2L1, GAS2L2, and GAS2L3. Interacts with RARRES1 and AGBL2. Post-translationally, acetylation at Lys-220 by KAT2B/PCAF promotes dynamic kinetochore-microtubule interactions in early mitosis. Crotonylated by KAT5 during mitosis, promoting astral microtubule plasticity and dynamic connection between astral microtubules and the cortex during mitotic chromosome segregation, thereby ensuring accurate spindle positioning in mitosis. Decrotonylated by HDAC3. In terms of tissue distribution, ubiquitously expressed.

The protein resides in the cytoplasm. The protein localises to the cytoskeleton. It is found in the microtubule organizing center. It localises to the centrosome. Its subcellular location is the golgi apparatus. The protein resides in the spindle. The protein localises to the spindle pole. Its function is as follows. Plus-end tracking protein (+TIP) that binds to the plus-end of microtubules and regulates the dynamics of the microtubule cytoskeleton. Recruits other +TIP proteins to microtubules by binding to a conserved Ser-X-Leu-Pro (SXLP) motif in their polypeptide chains. Promotes cytoplasmic microtubule nucleation and elongation. Involved in mitotic spindle positioning by stabilizing microtubules and promoting dynamic connection between astral microtubules and the cortex during mitotic chromosome segregation. Assists chromosome alignment in metaphase by recruiting the SKA complex to the spindle and stabilizing its interactions with microtubule bundles (K-fibers). Also acts as a regulator of minus-end microtubule organization: interacts with the complex formed by AKAP9 and PDE4DIP, leading to recruit CAMSAP2 to the Golgi apparatus, thereby tethering non-centrosomal minus-end microtubules to the Golgi, an important step for polarized cell movement. Promotes elongation of CAMSAP2-decorated microtubule stretches on the minus-end of microtubules. Acts as a regulator of autophagosome transport via interaction with CAMSAP2. Functions downstream of Rho GTPases and DIAPH1 in stable microtubule formation. May play a role in cell migration. The sequence is that of Microtubule-associated protein RP/EB family member 1 from Homo sapiens (Human).